A 236-amino-acid chain; its full sequence is SPbeta prophage-derived uncharacterized lipoprotein YokB (236 aa).

Residues 1–19 (MNIRFSMLVCVSFIFFTGG) form the signal peptide. C20 carries the N-palmitoyl cysteine lipid modification. Residue C20 is the site of S-diacylglycerol cysteine attachment. 2 disordered regions span residues 23-59 (SSANSNDGSKNKNESKEESSEEGVKENDNKLADTPNM) and 204-236 (VKKVSPEEEKREEKKREETMKSIYGEEHIKDNK). Residues 31–53 (SKNKNESKEESSEEGVKENDNKL) are compositionally biased toward basic and acidic residues.

Its subcellular location is the cell membrane. The sequence is that of SPbeta prophage-derived uncharacterized lipoprotein YokB (yokB) from Bacillus subtilis (strain 168).